Consider the following 148-residue polypeptide: Large ribosomal subunit protein uL22 (148 aa).

The protein belongs to the universal ribosomal protein uL22 family. In terms of assembly, part of the 50S ribosomal subunit.

Its function is as follows. This protein binds specifically to 23S rRNA. It makes multiple contacts with different domains of the 23S rRNA in the assembled 50S subunit and ribosome. Functionally, the globular domain of the protein is located near the polypeptide exit tunnel on the outside of the subunit, while an extended beta-hairpin is found that lines the wall of the exit tunnel in the center of the 70S ribosome. The sequence is that of Large ribosomal subunit protein uL22 from Thermoplasma volcanium (strain ATCC 51530 / DSM 4299 / JCM 9571 / NBRC 15438 / GSS1).